The primary structure comprises 1049 residues: MKCYNPSAFVPMAVTLVTVIIYLGVFIPLLIIQETVPSAPDDPTLYNGLNLTEAWLDLQSLSDGYHPFNSRKNDDVRNWLLKRIGEILDHNQIQYSTETESATISETQIKSDFDAEAPESVPSPSNSNDGSAERYHEDLRARKESPAVTVFNDLRSNYSSNALTSIGVKGRKLGISTYFEGNNIICYVRGSDDEEGEWWKTGSVNSKGKVHGKGGVMVNAHFDSVSTGFGATDDGVGVVTALQLIRYFTTPQNVPQKGFVALFNNGEEDGLYGAKAFLSHPMARFVHTFLNLEGAGAGGRATLFRSTDSEVTRAYAHAKHPFGTVVSSDGFSLGYVRSETDYVVFRAEGYRGLDVAFWQPRSQYHTDQDDAKHTSIDSLWHMLSASVATTRSLTKDTGNTFLGPRGDDKVGKVSNGKGSDGVWFDIFGTVFAVFKLRTLFAWSLTLLIAAPLMLFAVSYLLNRQDKFYFFAGSIKAKGPEDEPISLGGWRGAFRYPITLIITCAITFGCASLINKINPMIVYSSPYSVWSMSASLFFSIFWFIMAGCNFVRPSALQRGYAFMWLFVFGWIILVAATVYEDRFKISGGYLFVFYEAAIFLATLIAIGEQFALPKKSTYVENSQLDHDGNQDSHHQAVMGTDGANGADEANASNEAGQEEDPEDNVNDLAVPHETTPLIGGGAPTQRSSISTTFANRYRQVVPESYDGPADHHDKKGHKKHPYGGEQDWSAKLPIWTWLVQYLLVGPFILIVVGQVGLFLVAALHQTGTDGSPLLLPYLVVAVFSILLLLPVTPFIHRLTHHMPTFFFLVFIGTLIYNLVAFPFSPNNRYKAYFQQTVDLDTGLNKVTIVGIEQYIREIIAYIPSAAGQTINCEENPRIRSGLSFCSYEGIAPRVVDNVVDGIPPEKGYTDWLTYNVTRVPNENKATFHISGLETRACILRFDDPFSEFKVHGGAKTEERWDDVPDSGSDQIKLWSRDWNKEWKVDVEWAVGEDMKPGEEGRTGRVVCLWSDANERGVIPALDEARRFSPDWTSVVKLMDGLVEGSKRFVV.

Residues M1 to P11 lie on the Cytoplasmic side of the membrane. The chain crosses the membrane as a helical span at residues M12 to I32. Residues Q33–T438 lie on the Vacuolar side of the membrane. A glycan (N-linked (GlcNAc...) asparagine) is linked at N50. Residues D114–Y135 are disordered. N-linked (GlcNAc...) asparagine glycosylation is present at N157. H221 and D233 together coordinate Zn(2+). E267 (proton acceptor) is an active-site residue. Zn(2+)-binding residues include E268, E293, and H365. A helical membrane pass occupies residues L439–Y459. The Cytoplasmic portion of the chain corresponds to L460 to Y495. The chain crosses the membrane as a helical span at residues P496–I516. The Vacuolar segment spans residues N517–Y526. The chain crosses the membrane as a helical span at residues S527 to C547. Over N548 to R557 the chain is Cytoplasmic. A helical membrane pass occupies residues G558–Y578. Topologically, residues E579–S585 are vacuolar. The chain crosses the membrane as a helical span at residues G586–G606. The Cytoplasmic portion of the chain corresponds to E607–Y740. Residues S621–S686 form a disordered region. Residues Q622 to H633 show a composition bias toward basic and acidic residues. The span at G655–V664 shows a compositional bias: acidic residues. The chain crosses the membrane as a helical span at residues L741–A761. At L762–L773 the chain is on the vacuolar side. Residues L774–I794 form a helical membrane-spanning segment. Residues H795–M801 are Cytoplasmic-facing. A helical transmembrane segment spans residues P802 to F822. The Vacuolar portion of the chain corresponds to S823 to V1049. A glycan (N-linked (GlcNAc...) asparagine) is linked at N914.

The protein belongs to the peptidase M28 family. The cofactor is Zn(2+).

Its subcellular location is the vacuole membrane. Functionally, may be involved in vacuolar sorting and osmoregulation. This chain is Vacuolar membrane protease, found in Botryotinia fuckeliana (strain B05.10) (Noble rot fungus).